Here is a 130-residue protein sequence, read N- to C-terminus: Small ribosomal subunit protein uS8 (130 aa).

The protein belongs to the universal ribosomal protein uS8 family.

The protein is Small ribosomal subunit protein uS8 (RPS15A) of Paracentrotus lividus (Common sea urchin).